The chain runs to 204 residues: Putative 3-methyladenine DNA glycosylase (204 aa).

The protein belongs to the DNA glycosylase MPG family.

The chain is Putative 3-methyladenine DNA glycosylase from Bacillus mycoides (strain KBAB4) (Bacillus weihenstephanensis).